The chain runs to 967 residues: LRR receptor-like serine/threonine-protein kinase ERL2 (967 aa).

An N-terminal signal peptide occupies residues 1–27 (MRRIETMKGLFFCLGMVVFMLLGSVSP). Over 28 to 585 (MNNEGKALMA…SLPKSQVFTR (558 aa)) the chain is Extracellular. Asparagine 70 and asparagine 79 each carry an N-linked (GlcNAc...) asparagine glycan. LRR repeat units lie at residues 74 to 97 (NVVS…GDLM), 98 to 120 (NLQS…IGNC), 122 to 145 (SLAY…SKLK), 146 to 166 (QLEF…ATLT), 170 to 192 (NLKT…LYWN), 194 to 216 (VLQY…MCQL), 218 to 240 (GLWY…IGNC), 242 to 261 (SFEI…PYNI), 265 to 287 (QVAT…IGLM), 289 to 311 (ALAV…LGNL), 313 to 335 (FTGK…LGNM), 337 to 359 (RLSY…LGKL), 361 to 382 (QLFE…NISS), 385 to 406 (ALNQ…EFRN), 409 to 431 (SLTY…LGHI), 433 to 456 (NLDT…GDLE), 457 to 479 (HLLI…FGNL), 481 to 503 (SIQI…LGQL), 505 to 527 (NINS…LTNC), and 529 to 550 (SLAN…MKNF). Asparagine 228 and asparagine 239 each carry an N-linked (GlcNAc...) asparagine glycan. N-linked (GlcNAc...) asparagine glycosylation is found at asparagine 310 and asparagine 334. A glycan (N-linked (GlcNAc...) asparagine) is linked at asparagine 379. Residues asparagine 414, asparagine 443, asparagine 462, and asparagine 469 are each glycosylated (N-linked (GlcNAc...) asparagine). N-linked (GlcNAc...) asparagine glycosylation is found at asparagine 534, asparagine 539, and asparagine 549. The chain crosses the membrane as a helical span at residues 586 to 606 (VAVICMVLGFITLICMIFIAV). Topologically, residues 607-967 (YKSKQQKPVL…FREDISKSSL (361 aa)) are cytoplasmic. 2 positions are modified to phosphothreonine: threonine 640 and threonine 648. The region spanning 651-921 (LDEKYIIGYG…EVSRVLLSLV (271 aa)) is the Protein kinase domain. ATP-binding positions include 657 to 665 (IGYGASSTV) and lysine 679. Phosphotyrosine is present on residues tyrosine 724 and tyrosine 763. The Proton acceptor role is filled by aspartate 776. Tyrosine 818 carries the post-translational modification Phosphotyrosine. A Phosphothreonine modification is found at threonine 826. The disordered stretch occupies residues 921–955 (VPSPPPKKLPSPAKVQEGEERRESHSSDTTTPQWF). Residues 936-946 (QEGEERRESHS) show a composition bias toward basic and acidic residues.

The protein belongs to the protein kinase superfamily. Ser/Thr protein kinase family. In terms of tissue distribution, mostly expressed in developing organs, including bud clusters, flowers, siliques and young rosettes. Also detected in mature aboveground organs, such as leaves, stems and pedicels, but barely in roots.

The protein resides in the membrane. The catalysed reaction is L-seryl-[protein] + ATP = O-phospho-L-seryl-[protein] + ADP + H(+). It carries out the reaction L-threonyl-[protein] + ATP = O-phospho-L-threonyl-[protein] + ADP + H(+). In terms of biological role, receptor kinase that regulates inflorescence architecture and organ shape as well as stomatal patterning, including density and clustering, together with ERL1 and ER. The chain is LRR receptor-like serine/threonine-protein kinase ERL2 (ERL2) from Arabidopsis thaliana (Mouse-ear cress).